The chain runs to 926 residues: Beta-mannosidase A (926 aa).

The N-terminal stretch at Met-1 to Gly-21 is a signal peptide. 5 N-linked (GlcNAc...) asparagine glycosylation sites follow: Asn-40, Asn-242, Asn-277, Asn-311, and Asn-342. The active-site Proton donor is Glu-474. Residues Asn-532, Asn-603, Asn-626, Asn-653, Asn-733, Asn-756, Asn-785, Asn-793, Asn-819, and Asn-905 are each glycosylated (N-linked (GlcNAc...) asparagine).

Belongs to the glycosyl hydrolase 2 family. Beta-mannosidase A subfamily. Homodimer.

The protein localises to the secreted. The catalysed reaction is Hydrolysis of terminal, non-reducing beta-D-mannose residues in beta-D-mannosides.. It participates in glycan metabolism; N-glycan degradation. Its function is as follows. Exoglycosidase that cleaves the single beta-linked mannose residue from the non-reducing end of beta-mannosidic oligosaccharides of various complexity and length. Involved in the degradation of polymeric mannan and galactomannan. This Aspergillus fumigatus (strain ATCC MYA-4609 / CBS 101355 / FGSC A1100 / Af293) (Neosartorya fumigata) protein is Beta-mannosidase A (mndA).